Here is a 74-residue protein sequence, read N- to C-terminus: MKSSHAYLVCILLLSLFSLHQCVRLERSNKIDMSVCVHEICGGVFDGGCYCCPKTPALCWADIQFCTTYCQSQT.

A signal peptide spans methionine 1 to cysteine 22. Intrachain disulfides connect cysteine 36–cysteine 51, cysteine 41–cysteine 70, cysteine 49–cysteine 66, and cysteine 52–cysteine 59.

Belongs to the MEG family. As to expression, expressed in flowers.

This chain is EMBRYO SURROUNDING FACTOR 1-like protein 4 (ESFL4), found in Arabidopsis thaliana (Mouse-ear cress).